The sequence spans 59 residues: Large ribosomal subunit protein uL30 (59 aa).

Belongs to the universal ribosomal protein uL30 family. Part of the 50S ribosomal subunit.

The polypeptide is Large ribosomal subunit protein uL30 (Erwinia tasmaniensis (strain DSM 17950 / CFBP 7177 / CIP 109463 / NCPPB 4357 / Et1/99)).